Reading from the N-terminus, the 362-residue chain is Porin Omp2b (362 aa).

The signal sequence occupies residues 1 to 22 (MNIKSLLLGSAAALVAASGAQA).

This sequence belongs to the alphaproteobacteria porin family. As to quaternary structure, homotrimer.

The protein localises to the cell outer membrane. Forms passive diffusion pores that allow small molecular weight hydrophilic materials across the outer membrane. The protein is Porin Omp2b (omp2b) of Brucella abortus (strain S19).